A 119-amino-acid chain; its full sequence is Phosphoribosyl-AMP cyclohydrolase (119 aa).

Aspartate 77 is a Mg(2+) binding site. Residue cysteine 78 coordinates Zn(2+). Mg(2+) contacts are provided by aspartate 79 and aspartate 81. Residues cysteine 94 and cysteine 101 each coordinate Zn(2+).

It belongs to the PRA-CH family. Homodimer. Mg(2+) is required as a cofactor. Requires Zn(2+) as cofactor.

The protein localises to the cytoplasm. The enzyme catalyses 1-(5-phospho-beta-D-ribosyl)-5'-AMP + H2O = 1-(5-phospho-beta-D-ribosyl)-5-[(5-phospho-beta-D-ribosylamino)methylideneamino]imidazole-4-carboxamide. It participates in amino-acid biosynthesis; L-histidine biosynthesis; L-histidine from 5-phospho-alpha-D-ribose 1-diphosphate: step 3/9. Its function is as follows. Catalyzes the hydrolysis of the adenine ring of phosphoribosyl-AMP. This chain is Phosphoribosyl-AMP cyclohydrolase, found in Ruegeria pomeroyi (strain ATCC 700808 / DSM 15171 / DSS-3) (Silicibacter pomeroyi).